The primary structure comprises 331 residues: CMRF35-like molecule 9 (331 aa).

Residues 1-18 form the signal peptide; that stretch reads MRPLVLLWGCLVLPGYEA. Positions 19–120 constitute an Ig-like V-type domain; sequence LKGPKEISGF…LGRDESFEVT (102 aa). Residues 19 to 204 lie on the Extracellular side of the membrane; it reads LKGPKEISGF…KPSVSIPMVR (186 aa). C37 and C106 form a disulfide bridge. The O-linked (GalNAc...) threonine glycan is linked to T136. Residue S140 is glycosylated (O-linked (GalNAc...) serine). The O-linked (GalNAc...) threonine glycan is linked to T143. O-linked (GalNAc...) serine glycosylation is present at S145. 2 O-linked (GalNAc...) threonine glycosylation sites follow: T150 and T152. O-linked (GalNAc...) serine glycosylation occurs at S154. T164, T181, and T182 each carry an O-linked (GalNAc...) threonine glycan. S186 carries O-linked (GalNAc...) serine glycosylation. Residues 205–225 form a helical membrane-spanning segment; sequence MMAPVLILLSLLLAAGLIAFG. The Cytoplasmic portion of the chain corresponds to 226 to 331; the sequence is SHMLRWRKKA…ELAFSEFISV (106 aa). Over residues 278–293 the composition is skewed to polar residues; sequence NPSAVPSPETQNLSQS. The interval 278–318 is disordered; it reads NPSAVPSPETQNLSQSTEEEEAARSLDDDKEDVMAPPPLQM.

The protein belongs to the CD300 family. O-glycosylated with sialylated oligosaccharides. In terms of tissue distribution, expressed in monocyte cell lines. Expressed in certain types of endothelial and myeloid lineage cells. Expressed in mesenteric lymph nodes (LNs), spleen, thymus, lung, heart and kidney. Expressed in high endothelial venules (HEVs) in peripheral and mesenteric LNs (at protein level). Highly expressed in heart. Slightly expressed in spleen and thymus. Isoform 5 is expressed preferentially in heart. Isoform 1 is expressed predominantly in kidney and liver.

The protein localises to the apical cell membrane. It localises to the basolateral cell membrane. Its subcellular location is the endosome. The protein resides in the multivesicular body membrane. Its function is as follows. Receptor which may mediate L-selectin-dependent lymphocyte rollings. Binds SELL in a calcium dependent manner. Binds lymphocyte. The protein is CMRF35-like molecule 9 (Cd300lg) of Mus musculus (Mouse).